The following is a 294-amino-acid chain: Cyclin-G1 (294 aa).

The protein belongs to the cyclin family. Cyclin G subfamily.

The protein localises to the nucleus. Its function is as follows. May play a role in growth regulation. Is associated with G2/M phase arrest in response to DNA damage. May be an intermediate by which p53 mediates its role as an inhibitor of cellular proliferation. The chain is Cyclin-G1 (Ccng1) from Rattus norvegicus (Rat).